We begin with the raw amino-acid sequence, 596 residues long: Probable protein S-acyltransferase 22 (596 aa).

The next 2 membrane-spanning stretches (helical) occupy residues 15–35 and 44–64; these read VVAVAVFLALGFAFYVFFAPF and IAMGIYTPLITCVVGLYIWCA. Residues 102 to 125 are disordered; it reads TGGAKSHDGTCVEDTENGSNKKLE. A DHHC domain is found at 163–213; the sequence is FYCSLCEVEVFKYSKHCRVCDKCVDRFDHHCRWLNNCIGKRNYRKFFSLMV. Cysteine 193 acts as the S-palmitoyl cysteine intermediate in catalysis. 2 helical membrane-spanning segments follow: residues 215–235 and 254–274; these read AIFLLIMQWSTGIFVLVLCLL and LIPFVIVVGVCTVLAMLATLP. 3 disordered regions span residues 433-455, 498-523, and 549-596; these read SGRRMFPTKYEGVNNNGKQRRQS, QTSRAMSGSGNVMVTSSPESSLDSHD, and MGQQ…HKSR. Residues 498-518 are compositionally biased toward polar residues; it reads QTSRAMSGSGNVMVTSSPESS. The segment covering 549-571 has biased composition (low complexity); it reads MGQQRGQQQQQQLSMMMMPLSRS.

The protein belongs to the DHHC palmitoyltransferase family.

It is found in the cell membrane. The protein localises to the cytoplasmic vesicle membrane. The enzyme catalyses L-cysteinyl-[protein] + hexadecanoyl-CoA = S-hexadecanoyl-L-cysteinyl-[protein] + CoA. Palmitoyl acyltransferase. The sequence is that of Probable protein S-acyltransferase 22 (PAT22) from Arabidopsis thaliana (Mouse-ear cress).